Reading from the N-terminus, the 104-residue chain is Iron-sulfur cluster assembly protein CyaY (104 aa).

It belongs to the frataxin family.

Involved in iron-sulfur (Fe-S) cluster assembly. May act as a regulator of Fe-S biogenesis. In Aliivibrio fischeri (strain MJ11) (Vibrio fischeri), this protein is Iron-sulfur cluster assembly protein CyaY.